Reading from the N-terminus, the 930-residue chain is Isoleucine--tRNA ligase (930 aa).

Positions 57–67 (PYANGNIHVGH) match the 'HIGH' region motif. L-isoleucyl-5'-AMP is bound at residue E554. A 'KMSKS' region motif is present at residues 595-599 (KMSKS). K598 contributes to the ATP binding site. Zn(2+) contacts are provided by C888, C891, C908, and C911.

Belongs to the class-I aminoacyl-tRNA synthetase family. IleS type 1 subfamily. Monomer. Zn(2+) is required as a cofactor.

It localises to the cytoplasm. The enzyme catalyses tRNA(Ile) + L-isoleucine + ATP = L-isoleucyl-tRNA(Ile) + AMP + diphosphate. In terms of biological role, catalyzes the attachment of isoleucine to tRNA(Ile). As IleRS can inadvertently accommodate and process structurally similar amino acids such as valine, to avoid such errors it has two additional distinct tRNA(Ile)-dependent editing activities. One activity is designated as 'pretransfer' editing and involves the hydrolysis of activated Val-AMP. The other activity is designated 'posttransfer' editing and involves deacylation of mischarged Val-tRNA(Ile). The chain is Isoleucine--tRNA ligase from Streptococcus pneumoniae (strain CGSP14).